A 503-amino-acid chain; its full sequence is Alpha-1B-glycoprotein (503 aa).

The signal sequence occupies residues 1–21 (MSAWAALLLLWGLSLSPVTEQ). Ig-like V-type domains lie at 27-115 (PRPS…EVTG), 117-204 (EPLP…TVTI), 208-305 (DPPP…LVLS), 307-405 (GTLP…LRVD), and 406-501 (GPLP…LRVA). Residues Cys49 and Cys96 are joined by a disulfide bond. 2 N-linked (GlcNAc...) asparagine glycosylation sites follow: Asn137 and Asn182. Cystine bridges form between Cys142/Cys185, Cys235/Cys282, Cys333/Cys382, and Cys431/Cys478. The N-linked (GlcNAc...) asparagine glycan is linked to Asn379.

As to quaternary structure, interacts with CRISP3. Plasma.

The protein resides in the secreted. The sequence is that of Alpha-1B-glycoprotein from Bos taurus (Bovine).